The following is a 356-amino-acid chain: sn-glycerol-3-phosphate import ATP-binding protein UgpC (356 aa).

The 232-residue stretch at 4–235 folds into the ABC transporter domain; it reads LKLQAVTKSW…PASRFVASFI (232 aa). ATP is bound at residue 37–44; sequence GPSGCGKS.

The protein belongs to the ABC transporter superfamily. sn-glycerol-3-phosphate importer (TC 3.A.1.1.3) family. The complex is composed of two ATP-binding proteins (UgpC), two transmembrane proteins (UgpA and UgpE) and a solute-binding protein (UgpB).

Its subcellular location is the cell inner membrane. The enzyme catalyses sn-glycerol 3-phosphate(out) + ATP + H2O = sn-glycerol 3-phosphate(in) + ADP + phosphate + H(+). Its function is as follows. Part of the ABC transporter complex UgpBAEC involved in sn-glycerol-3-phosphate (G3P) import. Responsible for energy coupling to the transport system. The chain is sn-glycerol-3-phosphate import ATP-binding protein UgpC from Salmonella choleraesuis (strain SC-B67).